A 216-amino-acid chain; its full sequence is ATP-dependent Clp protease proteolytic subunit (216 aa).

The active-site Nucleophile is the S103. H128 is an active-site residue. The interval 197–216 (RRPALPGDDAPRDVSEGPTP) is disordered.

This sequence belongs to the peptidase S14 family. Fourteen ClpP subunits assemble into 2 heptameric rings which stack back to back to give a disk-like structure with a central cavity, resembling the structure of eukaryotic proteasomes.

Its subcellular location is the cytoplasm. The catalysed reaction is Hydrolysis of proteins to small peptides in the presence of ATP and magnesium. alpha-casein is the usual test substrate. In the absence of ATP, only oligopeptides shorter than five residues are hydrolyzed (such as succinyl-Leu-Tyr-|-NHMec, and Leu-Tyr-Leu-|-Tyr-Trp, in which cleavage of the -Tyr-|-Leu- and -Tyr-|-Trp bonds also occurs).. Functionally, cleaves peptides in various proteins in a process that requires ATP hydrolysis. Has a chymotrypsin-like activity. Plays a major role in the degradation of misfolded proteins. This is ATP-dependent Clp protease proteolytic subunit from Sphingopyxis alaskensis (strain DSM 13593 / LMG 18877 / RB2256) (Sphingomonas alaskensis).